Consider the following 55-residue polypeptide: ATP synthase protein 8 (55 aa).

Residues 4–24 (LDPAPWFSMLTVSWLIIFLLI) form a helical membrane-spanning segment.

The protein belongs to the ATPase protein 8 family. F-type ATPases have 2 components, CF(1) - the catalytic core - and CF(0) - the membrane proton channel.

Its subcellular location is the mitochondrion membrane. Functionally, mitochondrial membrane ATP synthase (F(1)F(0) ATP synthase or Complex V) produces ATP from ADP in the presence of a proton gradient across the membrane which is generated by electron transport complexes of the respiratory chain. F-type ATPases consist of two structural domains, F(1) - containing the extramembraneous catalytic core and F(0) - containing the membrane proton channel, linked together by a central stalk and a peripheral stalk. During catalysis, ATP synthesis in the catalytic domain of F(1) is coupled via a rotary mechanism of the central stalk subunits to proton translocation. Part of the complex F(0) domain. Minor subunit located with subunit a in the membrane. The protein is ATP synthase protein 8 (MT-ATP8) of Petromyzon marinus (Sea lamprey).